Here is a 488-residue protein sequence, read N- to C-terminus: 3-octaprenyl-4-hydroxybenzoate carboxy-lyase (488 aa).

Asn-172 lines the Mn(2+) pocket. Residues 175–177 (IYR), 189–191 (RWL), and 194–195 (RG) contribute to the prenylated FMN site. Glu-238 contributes to the Mn(2+) binding site. Asp-287 functions as the Proton donor in the catalytic mechanism.

It belongs to the UbiD family. Homohexamer. Prenylated FMN is required as a cofactor. Mn(2+) serves as cofactor.

It is found in the cell membrane. It catalyses the reaction a 4-hydroxy-3-(all-trans-polyprenyl)benzoate + H(+) = a 2-(all-trans-polyprenyl)phenol + CO2. It functions in the pathway cofactor biosynthesis; ubiquinone biosynthesis. Catalyzes the decarboxylation of 3-octaprenyl-4-hydroxy benzoate to 2-octaprenylphenol, an intermediate step in ubiquinone biosynthesis. In Pseudomonas putida (strain ATCC 47054 / DSM 6125 / CFBP 8728 / NCIMB 11950 / KT2440), this protein is 3-octaprenyl-4-hydroxybenzoate carboxy-lyase.